The following is a 364-amino-acid chain: Probable UDP-arabinopyranose mutase 1 (364 aa).

Residues 103-105 carry the DXD motif motif; the sequence is DDD. Arginine 151 carries an N-linked (Glc...) arginine glycan.

This sequence belongs to the RGP family. In terms of assembly, homopentamer or homohexamer. It depends on Mn(2+) as a cofactor. Requires Mg(2+) as cofactor. In terms of processing, reversibly glycosylated by UDP-glucose, UDP-xylose and UDP-galactose, but not UDP-mannose.

It localises to the secreted. Its subcellular location is the cell wall. It is found in the cell junction. The protein localises to the plasmodesma. The protein resides in the golgi apparatus. It carries out the reaction UDP-beta-L-arabinofuranose = UDP-beta-L-arabinopyranose. With respect to regulation, inhibited by inhibitor protein (IP) which may be a form of sucrose synthase. Functionally, probable UDP-L-arabinose mutase involved in the biosynthesis of cell wall non-cellulosic polysaccharides. Was initially shown to possess an autoglycosylating activity which is dependent on the presence of UDP-glucose and manganese. The sequence is that of Probable UDP-arabinopyranose mutase 1 from Pisum sativum (Garden pea).